The chain runs to 597 residues: Elongation factor 4 (597 aa).

The tr-type G domain occupies Lys2–Glu184. Residues Asp14–Thr19 and Asn131–Asp134 contribute to the GTP site.

It belongs to the TRAFAC class translation factor GTPase superfamily. Classic translation factor GTPase family. LepA subfamily.

It is found in the cell inner membrane. It carries out the reaction GTP + H2O = GDP + phosphate + H(+). In terms of biological role, required for accurate and efficient protein synthesis under certain stress conditions. May act as a fidelity factor of the translation reaction, by catalyzing a one-codon backward translocation of tRNAs on improperly translocated ribosomes. Back-translocation proceeds from a post-translocation (POST) complex to a pre-translocation (PRE) complex, thus giving elongation factor G a second chance to translocate the tRNAs correctly. Binds to ribosomes in a GTP-dependent manner. This is Elongation factor 4 from Francisella tularensis subsp. mediasiatica (strain FSC147).